Consider the following 1466-residue polypeptide: ABC transporter G family member 10 (1466 aa).

The segment covering 23 to 45 has biased composition (low complexity); it reads NTPQYENNNNNNNNTSGNESPNI. Residues 23 to 47 form a disordered region; it reads NTPQYENNNNNNNNTSGNESPNILN. Residues 138-392 form the ABC transporter 1 domain; it reads VTIFNLFRPS…FLDLGFDCEP (255 aa). In terms of domain architecture, ABC transmembrane type-2 1 spans 497–724; sequence WGDRFALISK…NGSTMSYQDQ (228 aa). Helical transmembrane passes span 501 to 521, 537 to 557, 586 to 606, 611 to 631, 641 to 661, and 767 to 787; these read FALI…ASLF, AIYA…GLTF, IPLT…MYGL, GKFF…VAFF, LYVS…YGGY, and IITF…LELF. In terms of domain architecture, ABC transporter 2 spans 838 to 1082; that stretch reads FTWNHIHYTV…LTSYFERNGV (245 aa). Residue 874–881 participates in ATP binding; that stretch reads GSSGAGKT. An ABC transmembrane type-2 2 domain is found at 1177 to 1399; sequence SYVYGIFTQA…LTCKEYFKPT (223 aa). 6 helical membrane-spanning segments follow: residues 1178 to 1198, 1214 to 1234, 1253 to 1273, 1290 to 1310, 1319 to 1339, and 1440 to 1460; these read YVYG…FTFW, IFEI…QFLI, FAIS…TICF, FYFY…GQVV, LAQT…GVLV, and YGIL…FVYL.

It belongs to the ABC transporter superfamily. ABCG family. PDR (TC 3.A.1.205) subfamily.

It is found in the membrane. The protein is ABC transporter G family member 10 (abcG10) of Dictyostelium discoideum (Social amoeba).